The following is a 593-amino-acid chain: Isocitrate dehydrogenase kinase/phosphatase (593 aa).

Residues 315–321 and Lys-336 each bind ATP; that span reads APGIRGM. Residue Asp-371 is part of the active site.

This sequence belongs to the AceK family.

It localises to the cytoplasm. The catalysed reaction is L-seryl-[isocitrate dehydrogenase] + ATP = O-phospho-L-seryl-[isocitrate dehydrogenase] + ADP + H(+). In terms of biological role, bifunctional enzyme which can phosphorylate or dephosphorylate isocitrate dehydrogenase (IDH) on a specific serine residue. This is a regulatory mechanism which enables bacteria to bypass the Krebs cycle via the glyoxylate shunt in response to the source of carbon. When bacteria are grown on glucose, IDH is fully active and unphosphorylated, but when grown on acetate or ethanol, the activity of IDH declines drastically concomitant with its phosphorylation. The polypeptide is Isocitrate dehydrogenase kinase/phosphatase (Salmonella typhi).